Here is a 495-residue protein sequence, read N- to C-terminus: Ubiquinone biosynthesis monooxygenase COQ6, mitochondrial (495 aa).

This sequence belongs to the UbiH/COQ6 family. Component of a multi-subunit COQ enzyme complex. FAD is required as a cofactor.

It localises to the mitochondrion inner membrane. It carries out the reaction a 4-hydroxy-3-(all-trans-polyprenyl)benzoate + 2 reduced [2Fe-2S]-[ferredoxin] + O2 + 2 H(+) = a 3,4-dihydroxy-5-(all-trans-polyprenyl)benzoate + 2 oxidized [2Fe-2S]-[ferredoxin] + H2O. The catalysed reaction is a 2-methoxy-6-(all-trans-polyprenyl)phenol + 2 reduced [2Fe-2S]-[ferredoxin] + O2 + 2 H(+) = a 2-methoxy-6-(all-trans-polyprenyl)benzene-1,4-diol + 2 oxidized [2Fe-2S]-[ferredoxin] + H2O. It functions in the pathway cofactor biosynthesis; ubiquinone biosynthesis. Functionally, FAD-dependent monooxygenase required for two non-consecutive steps during ubiquinone biosynthesis. Required for the C5-ring hydroxylation during ubiquinone biosynthesis by catalyzing the hydroxylation of 4-hydroxy-3-(all-trans-polyprenyl)benzoic acid to 3,4-dihydroxy-5-(all-trans-polyprenyl)benzoic acid. Also acts downstream of coq4, for the C1-hydroxylation during ubiquinone biosynthesis by catalyzing the hydroxylation of 2-methoxy-6-(all-trans-polyprenyl)phenol to 2-methoxy-6-(all-trans-polyprenyl)benzene-1,4-diol. The electrons required for the hydroxylation reaction are funneled indirectly to coq6 from NADPH via a ferredoxin/ferredoxin reductase system. The sequence is that of Ubiquinone biosynthesis monooxygenase COQ6, mitochondrial from Dictyostelium discoideum (Social amoeba).